A 256-amino-acid chain; its full sequence is Tryptophan synthase alpha chain (256 aa).

Active-site proton acceptor residues include E46 and D57.

The protein belongs to the TrpA family. Tetramer of two alpha and two beta chains.

The enzyme catalyses (1S,2R)-1-C-(indol-3-yl)glycerol 3-phosphate + L-serine = D-glyceraldehyde 3-phosphate + L-tryptophan + H2O. Its pathway is amino-acid biosynthesis; L-tryptophan biosynthesis; L-tryptophan from chorismate: step 5/5. The alpha subunit is responsible for the aldol cleavage of indoleglycerol phosphate to indole and glyceraldehyde 3-phosphate. In Bacteroides thetaiotaomicron (strain ATCC 29148 / DSM 2079 / JCM 5827 / CCUG 10774 / NCTC 10582 / VPI-5482 / E50), this protein is Tryptophan synthase alpha chain.